We begin with the raw amino-acid sequence, 405 residues long: Cystathionine gamma-lyase (405 aa).

The substrate site is built by R62, Y114, and R119. K212 bears the N6-(pyridoxal phosphate)lysine mark. E339 is a substrate binding site.

The protein belongs to the trans-sulfuration enzymes family. As to quaternary structure, homotetramer. Interacts with CALM in a calcium-dependent manner. Pyridoxal 5'-phosphate serves as cofactor.

It localises to the cytoplasm. It carries out the reaction L,L-cystathionine + H2O = 2-oxobutanoate + L-cysteine + NH4(+). The enzyme catalyses L-cysteine + H2O = hydrogen sulfide + pyruvate + NH4(+) + H(+). It catalyses the reaction L-homocysteine + H2O = 2-oxobutanoate + hydrogen sulfide + NH4(+) + H(+). The catalysed reaction is L-homoserine = 2-oxobutanoate + NH4(+). It carries out the reaction L-selenocystathionine + H2O = L-selenocysteine + 2-oxobutanoate + NH4(+). Its pathway is amino-acid biosynthesis; L-cysteine biosynthesis; L-cysteine from L-homocysteine and L-serine: step 2/2. Its function is as follows. Catalyzes the last step in the trans-sulfuration pathway from L-methionine to L-cysteine in a pyridoxal-5'-phosphate (PLP)-dependent manner, which consists on cleaving the L,L-cystathionine molecule into L-cysteine, ammonia and 2-oxobutanoate. Part of the L-cysteine derived from the trans-sulfuration pathway is utilized for biosynthesis of the ubiquitous antioxidant glutathione. Besides its role in the conversion of L-cystathionine into L-cysteine, it utilizes L-cysteine and L-homocysteine as substrates (at much lower rates than L,L-cystathionine) to produce hydrogen sulfide (H2S). In vitro, it converts two L-cysteine molecules into lanthionine and H2S, and two L-homocysteine molecules to homolanthionine and H2S, which can be particularly relevant under conditions of severe hyperhomocysteinemia. Lanthionine and homolanthionine are structural homologs of L,L-cystathionine that differ by the absence or presence of an extra methylene group, respectively. Acts as a cysteine-protein sulfhydrase by mediating sulfhydration of target proteins: sulfhydration consists of converting -SH groups into -SSH on specific cysteine residues of target proteins such as GAPDH, PTPN1 and NF-kappa-B subunit RELA, thereby regulating their function. By generating the gasotransmitter H2S, it participates in a number of physiological processes such as vasodilation, bone protection, and inflammation. Plays an essential role in myogenesis by contributing to the biogenesis of H2S in skeletal muscle tissue. Can also accept homoserine as substrate. Catalyzes the elimination of selenocystathionine (which can be derived from the diet) to yield selenocysteine, ammonia and 2-oxobutanoate. This is Cystathionine gamma-lyase (CTH) from Sus scrofa (Pig).